The sequence spans 388 residues: Succinate--CoA ligase [ADP-forming] subunit beta (388 aa).

The region spanning lysine 9–glutamate 244 is the ATP-grasp domain. Residues lysine 46, glycine 53–glycine 55, glutamate 99, cysteine 102, and glutamate 107 contribute to the ATP site. Residues asparagine 199 and aspartate 213 each contribute to the Mg(2+) site. Residues asparagine 264 and glycine 321–methionine 323 each bind substrate.

Belongs to the succinate/malate CoA ligase beta subunit family. In terms of assembly, heterotetramer of two alpha and two beta subunits. It depends on Mg(2+) as a cofactor.

The catalysed reaction is succinate + ATP + CoA = succinyl-CoA + ADP + phosphate. The enzyme catalyses GTP + succinate + CoA = succinyl-CoA + GDP + phosphate. It participates in carbohydrate metabolism; tricarboxylic acid cycle; succinate from succinyl-CoA (ligase route): step 1/1. In terms of biological role, succinyl-CoA synthetase functions in the citric acid cycle (TCA), coupling the hydrolysis of succinyl-CoA to the synthesis of either ATP or GTP and thus represents the only step of substrate-level phosphorylation in the TCA. The beta subunit provides nucleotide specificity of the enzyme and binds the substrate succinate, while the binding sites for coenzyme A and phosphate are found in the alpha subunit. This Staphylococcus saprophyticus subsp. saprophyticus (strain ATCC 15305 / DSM 20229 / NCIMB 8711 / NCTC 7292 / S-41) protein is Succinate--CoA ligase [ADP-forming] subunit beta.